The chain runs to 264 residues: Anamorsin homolog 2 (264 aa).

An N-terminal SAM-like domain region spans residues 1-142; that stretch reads MAATAAALAV…KVSWSMGSSF (142 aa). Positions 143 to 174 are linker; sequence PLKKATKGLPKIQIDDDSELIDEDSLLTEDDL. [2Fe-2S] cluster is bound by residues Cys185, Cys194, Cys197, and Cys199. Residues 185–199 form a fe-S binding site A region; it reads CEVGATRKACKNCTC. Residues Cys225, Cys228, Cys236, and Cys239 each coordinate [4Fe-4S] cluster. 2 short sequence motifs (cx2C motif) span residues 225-228 and 236-239; these read CGNC and CGTC. The segment at 225 to 239 is fe-S binding site B; it reads CGNCGLGDAFRCGTC.

This sequence belongs to the anamorsin family. As to quaternary structure, monomer. Requires [2Fe-2S] cluster as cofactor. It depends on [4Fe-4S] cluster as a cofactor.

The protein resides in the cytoplasm. It is found in the mitochondrion intermembrane space. Functionally, component of the cytosolic iron-sulfur (Fe-S) protein assembly (CIA) machinery. Required for the maturation of extramitochondrial Fe-S proteins. Part of an electron transfer chain functioning in an early step of cytosolic Fe-S biogenesis, facilitating the de novo assembly of a [4Fe-4S] cluster on the cytosolic Fe-S scaffold complex. Electrons are transferred from NADPH via a FAD- and FMN-containing diflavin oxidoreductase. Together with the diflavin oxidoreductase, also required for the assembly of the diferric tyrosyl radical cofactor of ribonucleotide reductase (RNR), probably by providing electrons for reduction during radical cofactor maturation in the catalytic small subunit. The sequence is that of Anamorsin homolog 2 from Oryza sativa subsp. indica (Rice).